The chain runs to 369 residues: Aspartate-semialdehyde dehydrogenase (369 aa).

Residues 11–14, 38–39, and Q75 contribute to the NADP(+) site; these read RGMV and TS. R104 contacts phosphate. C137 functions as the Acyl-thioester intermediate in the catalytic mechanism. Q164 is a binding site for substrate. Residues 167–168 and P195 each bind NADP(+); that span reads SG. E243 contacts substrate. K246 serves as a coordination point for phosphate. R269 contributes to the substrate binding site. H276 serves as the catalytic Proton acceptor. Residue Q352 participates in NADP(+) binding.

The protein belongs to the aspartate-semialdehyde dehydrogenase family. In terms of assembly, homodimer.

It carries out the reaction L-aspartate 4-semialdehyde + phosphate + NADP(+) = 4-phospho-L-aspartate + NADPH + H(+). It participates in amino-acid biosynthesis; L-lysine biosynthesis via DAP pathway; (S)-tetrahydrodipicolinate from L-aspartate: step 2/4. It functions in the pathway amino-acid biosynthesis; L-methionine biosynthesis via de novo pathway; L-homoserine from L-aspartate: step 2/3. Its pathway is amino-acid biosynthesis; L-threonine biosynthesis; L-threonine from L-aspartate: step 2/5. Functionally, catalyzes the NADPH-dependent formation of L-aspartate-semialdehyde (L-ASA) by the reductive dephosphorylation of L-aspartyl-4-phosphate. The polypeptide is Aspartate-semialdehyde dehydrogenase (Buchnera aphidicola subsp. Baizongia pistaciae (strain Bp)).